The primary structure comprises 462 residues: Alanine racemase (462 aa).

Lys34 acts as the Proton acceptor; specific for D-alanine in catalysis. Lys34 is subject to N6-(pyridoxal phosphate)lysine. Residues 73–132 are unknown insert; sequence ASWHESVFRHCEKNYTVIRRSNPVKNSVSQNFFNYFSGLQQCFAPRNDGSSIHATTPKAL. Position 193 (Arg193) interacts with substrate. The region spanning 286–332 is the RPE1 insert domain; sequence DLSNNLSYKEEFEGDTERRTAAYINVREDSSTGSTYKLPLEGGYSRG. Tyr357 serves as the catalytic Proton acceptor; specific for L-alanine. Met405 contributes to the substrate binding site.

Belongs to the alanine racemase family. Pyridoxal 5'-phosphate serves as cofactor.

The catalysed reaction is L-alanine = D-alanine. It participates in amino-acid biosynthesis; D-alanine biosynthesis; D-alanine from L-alanine: step 1/1. Its function is as follows. Catalyzes the interconversion of L-alanine and D-alanine. May also act on other amino acids. The chain is Alanine racemase (alr) from Rickettsia felis (strain ATCC VR-1525 / URRWXCal2) (Rickettsia azadi).